The following is a 300-amino-acid chain: ESX-5 secretion-associated protein EspG5 (300 aa).

This sequence belongs to the EspG family. As to quaternary structure, interacts specifically with ESX-5-dependent PE/PPE proteins. Binds PPE33 and PPE18. Does not interact with EsxN. Monomer in solution.

The protein localises to the cytoplasm. Its function is as follows. Specific chaperone for cognate PE/PPE proteins. Plays an important role in preventing aggregation of PE/PPE dimers. Required for LipY and PE31/PPE18 secretion. The chain is ESX-5 secretion-associated protein EspG5 from Mycobacterium marinum (strain ATCC BAA-535 / M).